Consider the following 277-residue polypeptide: Transcription factor HES-4-B (277 aa).

The interval 1-44 (MPADSMEKPTASPIAGAPANSAQTPDKPKSASEHRKSSKPIMEK) is disordered. Over residues 26–35 (DKPKSASEHR) the composition is skewed to basic and acidic residues. Residues 34-91 (HRKSSKPIMEKRRRARINESLGQLKTLILDALKKDSSRHSKLEKADILEMTVKHLRNL) form the bHLH domain. In terms of domain architecture, Orange spans 110–143 (YRAGFNECMNEVTRFLSTCEGVNTEVRTRLLGHL). Residues 258-277 (VSPLGGSTRADSAESVWRPW) are disordered. Positions 274–277 (WRPW) match the WRPW motif motif.

Transcription repression requires formation of a complex with a corepressor protein of the Groucho/TLE family. Interacts with the bHLH protein hes6; this interaction may inhibit the transcriptional repressor activity. Binds DNA in the form of a heterodimer with the bHLH protein hey1/hrt1. Interacts (via Orange domain) with id3 (via HLH domain). As to expression, dynamically expressed in the borders of several tissue territories. Expressed in the pre-placodal ectoderm (PPE) from gastrula stage. During gastrulation, expressed in the deep layer of the dorsal lip, the Spemann organizer and three distinct regions in the prospective neuroectoderm: neural plate border, presumptive floor plate/notoplate and anterior neural plate. At later stages, expression is localized to the anterior of the prechordal plate, the presomitic mesoderm, neural tube, neural crest derivatives and several tissues of the central nervous system, with expression in the developing floor plate continues to at least the tadpole stage. From the early tailbud stage, expressed in the dorsoanterior region of the developing pronephros. During early tailbud stages, broadly expressed within the pronephric mesoderm. and in the sensorial layer of the ectoderm covering the pronephros anlagen. During late tailbud to early tadpole stages, expressed in the ventral region of the pronephros. Expression remains in the proximal and distal tubules at late tadpole stages (stage 35).

Its subcellular location is the nucleus. Transcriptional repressor. Binds DNA on N-box motifs: 5'-CACNAG-3'. Promotes floor plate development and prechordal plate development. Required for lens development as early as the stage of lens field formation, partly through regulation of gene expression of the cell cycle inhibitor cdknx/p27(xic1). Required for formation of the neural crest downstream of multiple signaling pathways, and acts at the neural plate border via both DNA-binding dependent and independent mechanisms; acts in a DNA-binding dependent manner to repress pro-apoptotic and neural crest differentiation genes, including id3, delta1, and cdknx/p27(xic1), and thus promote the cell survival of neural plate border cells and maintain them in an undifferentiated state. Represses transcription of id3, at least in part through the repression of bmp4. On the other hand, acts in a DNA-independent manner separate from the transcriptional repressor function, to stimulate cell proliferation and promote neural crest formation. Via this DNA-independent route, acts in neurulae upstream of stat3 to transiently up-regulate the notch ligand dll1/delta1, which in turn up-regulates id3 expression. Then interacts directly with id3, which blocks the transcriptional repressor function of hes4-B/hairy2b to allow the progression of neural crest progenitors through specification and differentiation. Also acts via repressor-dependent and repressor-independent mechanisms in early gastrulae to establish the prospective anterior prechordal mesoderm identity in the Spemann organizer; induces specific genes independently from direct transcriptional regulation, and represses the genes specific for neighboring tissues through direct transcriptional repression. Modulates lateral inhibition during notch signaling and regulates the cell context dependent effects of notch (which can have inhibitory, permissive or enhancing roles in muscle or neural differentiation). Inhibits myogenesis. The polypeptide is Transcription factor HES-4-B (hes4-b) (Xenopus laevis (African clawed frog)).